The following is a 585-amino-acid chain: Rab GTPase-binding effector protein 2 (585 aa).

At A2 the chain carries N-acetylalanine. A coiled-coil region spans residues 27 to 183 (QEGAKVEAES…ELIQEIQRRP (157 aa)). Disordered regions lie at residues 178 to 265 (EIQR…ASLV), 381 to 408 (ENQG…EESL), and 491 to 515 (EEQS…EEAQ). Residues S188, S192, S198, and S202 each carry the phosphoserine modification. The stretch at 288-540 (NQWEQLQLEG…QAELETSEQV (253 aa)) forms a coiled coil. The segment covering 491–501 (EEQSKAKRQEV) has biased composition (basic and acidic residues).

The protein belongs to the rabaptin family. In terms of assembly, heterodimer with RABGEF1. The dimer binds RAB5A that has been activated by GTP-binding. Interacts with SDCCAG8; this interaction is important for ciliogenesis regulation. Interacts with RAB4; this interaction may mediate VEGFR2 cell surface expression.

The protein localises to the cytoplasm. The protein resides in the early endosome. It is found in the cytoskeleton. Its subcellular location is the microtubule organizing center. It localises to the centrosome. The protein localises to the cilium basal body. In terms of biological role, plays a role in membrane trafficking and in homotypic early endosome fusion. Participates in arteriogenesis by regulating vascular endothelial growth factor receptor 2/VEGFR2 cell surface expression and endosomal trafficking. By interacting with SDCCAG8, localizes to centrosomes and plays a critical role in ciliogenesis. In Bos taurus (Bovine), this protein is Rab GTPase-binding effector protein 2 (RABEP2).